Consider the following 274-residue polypeptide: Undecaprenyl-diphosphatase (274 aa).

8 consecutive transmembrane segments (helical) span residues 4 to 24 (LLVI…LLPI), 46 to 66 (VVFE…EYRV), 86 to 106 (INVA…SDFI), 109 to 129 (VLFS…IIMW), 145 to 165 (ISYA…IPGT), 188 to 208 (FSFF…LWEA), 214 to 234 (IEDM…TFAV), and 250 to 270 (FAWY…TGVI).

This sequence belongs to the UppP family.

The protein resides in the cell inner membrane. It carries out the reaction di-trans,octa-cis-undecaprenyl diphosphate + H2O = di-trans,octa-cis-undecaprenyl phosphate + phosphate + H(+). In terms of biological role, catalyzes the dephosphorylation of undecaprenyl diphosphate (UPP). Confers resistance to bacitracin. This is Undecaprenyl-diphosphatase from Cellvibrio japonicus (strain Ueda107) (Pseudomonas fluorescens subsp. cellulosa).